A 452-amino-acid polypeptide reads, in one-letter code: MQRRIMGIETEFGVTCTFHGHRRLSPDEVARYLFRRVVSWGRSSNVFLRNGARLYLDVGSHPEYATAECDNLVQLVTHDRAGEWVLEDLLVDAEQRLADEGIGGDIYLFKNNTDSAGNSYGCHENYLIVRAGEFSRISDVLLPFLVTRQLICGAGKVLQTPKAATFCLSQRAEHIWEGVSSATTRSRPIINTRDEPHADAEKYRRLHVIVGDSNMCETTTMLKVGTAALVLEMIEAGVPFRDFSLDNPIRAIREVSHDITGRRPVRLAGGRQASALDIQREYYSRAVEHLQTREPNAQIEQIVDLWGRQLDAVESQDFAKVDTEIDWVIKRKLFQRYQDRYNMELSDPKIAQLDLAYHDIKRGRGVFDLLQRKGLAARVTTDEDIAEAVDTPPQTTRARLRGEFISAAQAAGRDFTVDWVHLKLNDQAQRTVLCKDPFRAVDERVKRLIASM.

Glutamate 9 is a binding site for Mg(2+). Arginine 53 serves as a coordination point for ATP. Tyrosine 55 provides a ligand contact to Mg(2+). Aspartate 57 (proton acceptor) is an active-site residue. Glutamate 63 contributes to the Mg(2+) binding site. ATP contacts are provided by threonine 66 and tryptophan 419.

Belongs to the Pup ligase/Pup deamidase family. Pup-conjugating enzyme subfamily.

The enzyme catalyses ATP + [prokaryotic ubiquitin-like protein]-L-glutamate + [protein]-L-lysine = ADP + phosphate + N(6)-([prokaryotic ubiquitin-like protein]-gamma-L-glutamyl)-[protein]-L-lysine.. It functions in the pathway protein degradation; proteasomal Pup-dependent pathway. Its pathway is protein modification; protein pupylation. Functionally, catalyzes the covalent attachment of the prokaryotic ubiquitin-like protein modifier Pup to the proteasomal substrate proteins, thereby targeting them for proteasomal degradation. This tagging system is termed pupylation. The ligation reaction involves the side-chain carboxylate of the C-terminal glutamate of Pup and the side-chain amino group of a substrate lysine. This chain is Pup--protein ligase, found in Mycobacterium avium (strain 104).